A 511-amino-acid chain; its full sequence is Coatomer subunit delta (511 aa).

Residues 167–177 (QQARRDAERQG) show a composition bias toward basic and acidic residues. Residues 167–188 (QQARRDAERQGKKAPGFGGFGS) are disordered. Serine 223 bears the Phosphoserine mark. N6-acetyllysine occurs at positions 233 and 241. Position 244 is a phosphoserine (serine 244). Positions 271–511 (MESVHMKIEE…TFLVDKYEIL (241 aa)) constitute an MHD domain. Lysine 309 and lysine 351 each carry N6-acetyllysine. The residue at position 493 (serine 493) is a Phosphoserine.

Belongs to the adaptor complexes medium subunit family. Delta-COP subfamily. Oligomeric complex that consists of at least the alpha, beta, beta', gamma, delta, epsilon and zeta subunits.

It is found in the cytoplasm. It localises to the golgi apparatus membrane. The protein resides in the cytoplasmic vesicle. Its subcellular location is the COPI-coated vesicle membrane. The coatomer is a cytosolic protein complex that binds to dilysine motifs and reversibly associates with Golgi non-clathrin-coated vesicles, which further mediate biosynthetic protein transport from the ER, via the Golgi up to the trans Golgi network. Coatomer complex is required for budding from Golgi membranes, and is essential for the retrograde Golgi-to-ER transport of dilysine-tagged proteins. In mammals, the coatomer can only be recruited by membranes associated to ADP-ribosylation factors (ARFs), which are small GTP-binding proteins; the complex also influences the Golgi structural integrity, as well as the processing, activity, and endocytic recycling of LDL receptors. The protein is Coatomer subunit delta (ARCN1) of Pongo abelii (Sumatran orangutan).